The following is a 704-amino-acid chain: DNA ligase (704 aa).

Residues 44-48 (DYEYD), 93-94 (SI), and glutamate 125 each bind NAD(+). Lysine 127 serves as the catalytic N6-AMP-lysine intermediate. Residues arginine 148, glutamate 184, lysine 300, and lysine 324 each coordinate NAD(+). Residues cysteine 418, cysteine 421, cysteine 436, and cysteine 442 each coordinate Zn(2+). In terms of domain architecture, BRCT spans 625–704 (IISSNISGKI…DEWEHLINEK (80 aa)).

It belongs to the NAD-dependent DNA ligase family. LigA subfamily. It depends on Mg(2+) as a cofactor. Requires Mn(2+) as cofactor.

It carries out the reaction NAD(+) + (deoxyribonucleotide)n-3'-hydroxyl + 5'-phospho-(deoxyribonucleotide)m = (deoxyribonucleotide)n+m + AMP + beta-nicotinamide D-nucleotide.. DNA ligase that catalyzes the formation of phosphodiester linkages between 5'-phosphoryl and 3'-hydroxyl groups in double-stranded DNA using NAD as a coenzyme and as the energy source for the reaction. It is essential for DNA replication and repair of damaged DNA. This is DNA ligase from Pelobacter propionicus (strain DSM 2379 / NBRC 103807 / OttBd1).